A 95-amino-acid polypeptide reads, in one-letter code: Large ribosomal subunit protein bL25 (95 aa).

The protein belongs to the bacterial ribosomal protein bL25 family. In terms of assembly, part of the 50S ribosomal subunit; part of the 5S rRNA/L5/L18/L25 subcomplex. Contacts the 5S rRNA. Binds to the 5S rRNA independently of L5 and L18.

This is one of the proteins that binds to the 5S RNA in the ribosome where it forms part of the central protuberance. This Shewanella sp. (strain ANA-3) protein is Large ribosomal subunit protein bL25.